The following is a 443-amino-acid chain: EP1-like glycoprotein 4 (443 aa).

The first 22 residues, 1-22, serve as a signal peptide directing secretion; sequence MEFSTTLALFFTLSIFLVGAQA. The 131-residue stretch at 29-159 folds into the Bulb-type lectin domain; the sequence is QFRVVNEGGY…NGKFVWQSFD (131 aa). 4 N-linked (GlcNAc...) asparagine glycosylation sites follow: Asn66, Asn102, Asn258, and Asn269. Residues 254–296 form a WD repeat; sequence GSQFNVSTFLSRPKHNATLSFLRLESDGNIRVWSYSTLATSTA. One can recognise a PAN domain in the interval 356-433; that stretch reads CDPKTFHYFK…TSLVAYVKAP (78 aa). 2 cysteine pairs are disulfide-bonded: Cys387–Cys409 and Cys391–Cys397. Asn434 carries N-linked (GlcNAc...) asparagine glycosylation.

Its subcellular location is the secreted. It is found in the cell wall. In Arabidopsis thaliana (Mouse-ear cress), this protein is EP1-like glycoprotein 4.